The chain runs to 250 residues: 5'-nucleotidase SurE (250 aa).

Residues aspartate 8, aspartate 9, serine 39, and asparagine 91 each coordinate a divalent metal cation.

The protein belongs to the SurE nucleotidase family. Requires a divalent metal cation as cofactor.

The protein localises to the cytoplasm. It carries out the reaction a ribonucleoside 5'-phosphate + H2O = a ribonucleoside + phosphate. Nucleotidase that shows phosphatase activity on nucleoside 5'-monophosphates. This is 5'-nucleotidase SurE from Syntrophotalea carbinolica (strain DSM 2380 / NBRC 103641 / GraBd1) (Pelobacter carbinolicus).